The following is a 181-amino-acid chain: CDP-archaeol synthase (181 aa).

Transmembrane regions (helical) follow at residues 7–27, 55–75, 88–108, 126–146, and 147–167; these read VVWALWAMLPAYIPNNAAVLA, LIGTAAGTALALGLTQVTPSV, LRAGLGLAFGAMLGDIGASFL, LDFVVGALLCAFVAAPSWFTE, and TFTLPVLVVVVVATPVLHVVT.

This sequence belongs to the CDP-archaeol synthase family. The cofactor is Mg(2+).

The protein resides in the cell membrane. It carries out the reaction 2,3-bis-O-(geranylgeranyl)-sn-glycerol 1-phosphate + CTP + H(+) = CDP-2,3-bis-O-(geranylgeranyl)-sn-glycerol + diphosphate. Its pathway is membrane lipid metabolism; glycerophospholipid metabolism. In terms of biological role, catalyzes the formation of CDP-2,3-bis-(O-geranylgeranyl)-sn-glycerol (CDP-archaeol) from 2,3-bis-(O-geranylgeranyl)-sn-glycerol 1-phosphate (DGGGP) and CTP. This reaction is the third ether-bond-formation step in the biosynthesis of archaeal membrane lipids. The protein is CDP-archaeol synthase of Haloarcula marismortui (strain ATCC 43049 / DSM 3752 / JCM 8966 / VKM B-1809) (Halobacterium marismortui).